The primary structure comprises 461 residues: MKPSIFYSSRQPYLKYLAIILTTITIYVLTHSSYSADPNINDVTTKPISETVPQPPPQSPSSPEQQQQQPANQDQIVKVPEELKNKPQDLVVDNNKDQKPAVSGVPKSSSSSPQQQEKQDTKKESENSSSSKDPVKPEKVKATFVTLARNSELYDLIKSIRNVEDRFNRKFNYDWVFLNDDDFTQEFKDLTTALVSGKTKYGKIPKEHWSYPDWIDLKRAEETRKNMKLQKIIYGDSESYRHMCRFESGFFWRHPLLDDYDWYWRVEPSIDIHCDLNYDLFKYMEDNNKVYGFTISIHEFRATIPTLWDTTKKFIKENPQYLAENNFMDFISDDKGETYNLCHFWSNFEIANLNFWRGEAYRKYFDYLDQTGGFFYERWGDAPIHSIAAALFLPKDKIHYFDDVGYKHSVYTQCPLNPQFRYEHKCHCNPDNDFTFRGYSCGKKYFEKMGLQKPKEWEKYQ.

The Cytoplasmic segment spans residues Met1–Pro12. Residues Tyr13–Ser35 traverse the membrane as a helical; Signal-anchor for type II membrane protein segment. The span at Ser35 to Val52 shows a compositional bias: polar residues. A disordered region spans residues Ser35–Glu138. Residues Ala36–Gln461 lie on the Lumenal side of the membrane. Low complexity-rich tracts occupy residues Ser61 to Pro70 and Pro106 to Gln116. Over residues Glu117 to Glu126 the composition is skewed to basic and acidic residues. Residue Glu349 is the Nucleophile of the active site.

The protein belongs to the glycosyltransferase 15 family.

It localises to the golgi apparatus membrane. Its function is as follows. Involved in O-glycosylation of cell wall and secreted proteins. Transfers an alpha-D-mannosyl residue from GDP-mannose into lipid-linked oligosaccharide, forming an alpha-(1-&gt;2)-D-mannosyl-D-mannose linkage. Mainly responsible for the addition of the third mannose residue in an O-linked mannose pentamer. Can also substitute for MNT1 by adding the second mannose residue. Important for adherence to host surfaces and for virulence. This chain is Glycolipid 2-alpha-mannosyltransferase 2 (MNT2), found in Candida albicans (strain SC5314 / ATCC MYA-2876) (Yeast).